The primary structure comprises 291 residues: Serine hydrolase BPHL (291 aa).

The signal sequence occupies residues 1-37; it reads MVAVLGGRGVLRLRLLLSALKPGIHVPRAGPAAAFGT. An AB hydrolase-1 domain is found at 62 to 181; sequence AVLLLPGMLG…DSMIYEGIRD (120 aa). Residues K86 and K119 each carry the N6-acetyllysine modification. Position 126 is an N6-acetyllysine; alternate (K126). K126 is subject to N6-succinyllysine; alternate. The Nucleophile role is filled by S139. Residue K184 is modified to N6-succinyllysine. Residue K191 is modified to N6-acetyllysine; alternate. K191 is modified (N6-succinyllysine; alternate). K217 is subject to N6-acetyllysine. Mg(2+) is bound at residue D221. K243 is modified (N6-acetyllysine). The active-site Charge relay system is D244. N6-acetyllysine; alternate is present on residues K260 and K271. An N6-succinyllysine; alternate mark is found at K260 and K271. Residue H272 is the Charge relay system of the active site.

This sequence belongs to the AB hydrolase superfamily. Lipase family. In terms of assembly, monomer. May also form homodimers. As to expression, expressed at high levels in liver and kidney and lower levels in heart, intestine and skeletal muscle.

It localises to the mitochondrion. It carries out the reaction L-homocysteine thiolactone + H2O = L-homocysteine + H(+). The catalysed reaction is valacyclovir + H2O = acyclovir + L-valine + H(+). Specific alpha-amino acid ester serine hydrolase that prefers small, hydrophobic, and aromatic side chains and does not have a stringent requirement for the leaving group other than preferring a primary alcohol. Has homocysteine-thiolactonase activity (in vitro) and may play a significant role in the detoxification of homocysteine thiolactone in vivo. Catalyzes the hydrolytic activation of amino acid ester prodrugs of nucleoside analogs such as valacyclovir and valganciclovir, converting them into their active forms (acyclovir and ganciclovir). The protein is Serine hydrolase BPHL (BPHL) of Homo sapiens (Human).